The sequence spans 792 residues: Alpha-1,6-mannosylglycoprotein 6-beta-N-acetylglucosaminyltransferase B (792 aa).

The Cytoplasmic portion of the chain corresponds to Met1–Leu24. A helical; Signal-anchor for type II membrane protein transmembrane segment spans residues Phe25–Phe45. The Lumenal segment spans residues Ser46–Leu792. Residue Asn127 is glycosylated (N-linked (GlcNAc...) asparagine). Intrachain disulfides connect Cys157–Cys195, Cys168–Cys208, Cys184–Cys353, Cys387–Cys644, Cys700–Cys775, Cys704–Cys777, Cys711–Cys764, Cys732–Cys753, and Cys788–Cys791.

It belongs to the glycosyltransferase 18 family. It depends on Mn(2+) as a cofactor. As to expression, predominantly expressed in brain. Expressed in all areas of the adult and fetal brain. Also expressed at much lower levels in testis, spleen and thymus.

Its subcellular location is the golgi apparatus membrane. It catalyses the reaction N(4)-{beta-D-GlcNAc-(1-&gt;2)-[beta-D-GlcNAc-(1-&gt;4)]-alpha-D-Man-(1-&gt;3)-[beta-D-GlcNAc-(1-&gt;2)-alpha-D-Man-(1-&gt;6)]-beta-D-Man-(1-&gt;4)-beta-D-GlcNAc-(1-&gt;4)-beta-D-GlcNAc}-L-asparaginyl-[protein] + UDP-N-acetyl-alpha-D-glucosamine = N(4)-{beta-D-GlcNAc-(1-&gt;2)-[beta-D-GlcNAc-(1-&gt;4)]-alpha-D-Man-(1-&gt;3)-[beta-D-GlcNAc-(1-&gt;2)-[beta-D-GlcNAc-(1-&gt;6)]-alpha-D-Man-(1-&gt;6)]-beta-D-Man-(1-&gt;4)-beta-D-GlcNAc-(1-&gt;4)-beta-D-GlcNAc}-L-asparaginyl-[protein] + UDP + H(+). The catalysed reaction is 3-O-[N-acetyl-beta-D-glucosaminyl-(1-&gt;2)-alpha-D-mannosyl]-L-seryl-[protein] + UDP-N-acetyl-alpha-D-glucosamine = O(3)-{N-acetyl-beta-D-glucosaminyl-(1-&gt;2)-[N-acetyl-beta-D-glucosaminyl-(1-&gt;6)]-alpha-D-mannosyl}-L-seryl-[protein] + UDP + H(+). It carries out the reaction 3-O-[N-acetyl-beta-D-glucosaminyl-(1-&gt;2)-alpha-D-mannosyl]-L-threonyl-[protein] + UDP-N-acetyl-alpha-D-glucosamine = O(3)-{N-acetyl-beta-D-glucosaminyl-(1-&gt;2)-[N-acetyl-beta-D-glucosaminyl-(1-&gt;6)]-alpha-D-mannosyl}-L-threonyl-[protein] + UDP + H(+). Its pathway is protein modification; protein glycosylation. Glycosyltransferase that acts on alpha-linked mannose of N-glycans and O-mannosyl glycans. Catalyzes the transfer of N-acetylglucosamine (GlcNAc) to the beta 1-6 linkage of the mannose residue of GlcNAc-beta1,2-Man-alpha on both the alpha1,3- and alpha1,6-linked mannose arms in the core structure of N-glycan. Also acts on the GlcNAc-beta1,2-Man-alpha1-Ser/Thr moiety, forming a 2,6-branched structure in brain O-mannosyl glycan. Plays an active role in modulating integrin and laminin-dependent adhesion and migration of neuronal cells via its activity in the O-mannosyl glycan pathway. This Homo sapiens (Human) protein is Alpha-1,6-mannosylglycoprotein 6-beta-N-acetylglucosaminyltransferase B (MGAT5B).